The sequence spans 139 residues: Putative esterase PM0788 (139 aa).

It belongs to the thioesterase PaaI family.

This chain is Putative esterase PM0788, found in Pasteurella multocida (strain Pm70).